Here is a 625-residue protein sequence, read N- to C-terminus: Exonuclease mut-7 homolog (625 aa).

Position 17 is a phosphoserine (serine 17). The 3'-5' exonuclease domain occupies 410-602 (LIIVNKADEF…IYNTLIERVS (193 aa)).

This sequence belongs to the mut-7 family. As to quaternary structure, interacts with AGO1; the interaction is not RNA dependent. Mg(2+) serves as cofactor.

Functionally, possesses 3'-5' exoribonuclease activity. Required for 3'-end trimming of AGO1-bound miRNAs, in particular multiple-isoform miRNAs, which represents a critical step in miRNA maturation. The sequence is that of Exonuclease mut-7 homolog (Nbr) from Drosophila melanogaster (Fruit fly).